A 2170-amino-acid polypeptide reads, in one-letter code: ATP-binding cassette sub-family A member 7 (2170 aa).

The helical transmembrane segment at 22 to 42 (PIQLVVELLWPLFLFFILVAV) threads the bilayer. The Extracellular portion of the chain corresponds to 43 to 547 (RHSHPPLEHH…DVFLRVLSRS (505 aa)). Cys-75 and Cys-222 are joined by a disulfide. Residue Asn-309 is glycosylated (N-linked (GlcNAc...) asparagine). Helical transmembrane passes span 548 to 568 (LPLFLTLAWIYSVALTVKAVV), 591 to 611 (LGWFLSCLGPFLVSAALLVLV), 624 to 644 (VVVFLFLAAFAVATVAQSFLL), 653 to 673 (LAAACGGLAYFALYLPYVLCV), 679 to 699 (LPLGGLLAVSLLSPVAFGFGC), and 733 to 753 (AFLLLDAVIYGLALWYLEAVC). Residues 805 to 1036 (VSIRGLKKHF…LGCGYYLTLV (232 aa)) enclose the ABC transporter 1 domain. 839–846 (GHNGAGKT) provides a ligand contact to ATP. Residues 847-867 (TTLSILSGLFPPSSGSASILG) traverse the membrane as a helical segment. Positions 1044–1086 (THDLKGDTEDPRREKKSGSEGKTADTVLTRDGPHRSSQVPAPD) are disordered. The span at 1045–1066 (HDLKGDTEDPRREKKSGSEGKT) shows a compositional bias: basic and acidic residues. The helical transmembrane segment at 1257-1277 (IVLPALFVGLALFFTLIVPPF) threads the bilayer. Topologically, residues 1278–1562 (GQYPPLQLSP…TLIASSVDVL (285 aa)) are extracellular. The cysteines at positions 1370 and 1384 are disulfide-linked. The next 6 membrane-spanning stretches (helical) occupy residues 1563–1583 (VSICVVFAMSFVPASFTLVLI), 1609–1629 (FLWDMCNYLVAVCIVVLIFLA), 1646–1666 (LLLLLYGWSITPLMYPASFFF), 1674–1694 (VVLTCINLFIGINSSMATFVL), 1708–1728 (ILKQVFLIFPHFCLGRGLIDM), and 1754–1774 (IIGKNLLAMVAQGPLFLLITL). The ABC transporter 2 domain occupies 1818–2050 (LVLRDLTKVY…FGAGHTLTLR (233 aa)). 1852–1859 (GVNGAGKT) provides a ligand contact to ATP. Residues 2129 to 2170 (QGEEEEGSGQETETREVSTPGLQHPKRVSRFLEDPSSVETVI) are disordered.

Belongs to the ABC transporter superfamily. ABCA family. Post-translationally, N-glycosylated. Expressed in blood cells. Also detected in brain and ovary tissues (at protein level). Expressed in platelet.

Its subcellular location is the cell membrane. It localises to the golgi apparatus membrane. It is found in the early endosome membrane. The protein resides in the cell projection. The protein localises to the ruffle membrane. Its subcellular location is the phagocytic cup. It localises to the cytoplasm. Functionally, ATP-binding cassette (ABC) transporter that plays a role in lipid homeostasis and macrophage-mediated phagocytosis. Binds APOA1 and may function in apolipoprotein-mediated phospholipid efflux from cells. May also mediate cholesterol efflux. May regulate cellular ceramide homeostasis during keratinocyte differentiation. Involved in lipid raft organization and CD1D localization on thymocytes and antigen-presenting cells, which plays an important role in natural killer T-cell development and activation. Plays a role in phagocytosis of apoptotic cells by macrophages. Macrophage phagocytosis is stimulated by APOA1 or APOA2, probably by stabilization of ABCA7. Also involved in phagocytic clearance of amyloid-beta by microglia cells and macrophages. Further limits amyloid-beta production by playing a role in the regulation of amyloid-beta A4 precursor protein (APP) endocytosis and/or processing. The sequence is that of ATP-binding cassette sub-family A member 7 (Abca7) from Rattus norvegicus (Rat).